The sequence spans 658 residues: ATP-dependent zinc metalloprotease FtsH 4 (658 aa).

A disordered region spans residues 1–22 (MREPTNRQGSPGPGEPRPPAQG). Residues 1 to 28 (MREPTNRQGSPGPGEPRPPAQGRPRFPT) are Cytoplasmic-facing. Residues 29-49 (WILWVALLALALWNVYTFFWP) traverse the membrane as a helical segment. Residues 50–149 (SSGARLNIPY…TVKIDQAGGS (100 aa)) lie on the Extracellular side of the membrane. A disordered region spans residues 95-114 (QVLSPGDPVPPGTSPNEIRT). The chain crosses the membrane as a helical span at residues 150-170 (VWPSLLATIVPLFLFIGLMVY). The Cytoplasmic portion of the chain corresponds to 171-658 (LGRSMSRGQQ…AAPAAAADSV (488 aa)). 243-250 (GPPGTGKT) is an ATP binding site. H464 is a binding site for Zn(2+). The active site involves E465. Positions 468 and 540 each coordinate Zn(2+).

This sequence in the central section; belongs to the AAA ATPase family. The protein in the C-terminal section; belongs to the peptidase M41 family. Homohexamer. It depends on Zn(2+) as a cofactor.

The protein resides in the cell membrane. Functionally, acts as a processive, ATP-dependent zinc metallopeptidase for both cytoplasmic and membrane proteins. Plays a role in the quality control of integral membrane proteins. The protein is ATP-dependent zinc metalloprotease FtsH 4 (ftsh4) of Sphaerobacter thermophilus (strain ATCC 49802 / DSM 20745 / KCCM 41009 / NCIMB 13125 / S 6022).